Reading from the N-terminus, the 130-residue chain is Glycine cleavage system H protein (130 aa).

Positions Thr24–Lys106 constitute a Lipoyl-binding domain. Lys65 carries the N6-lipoyllysine modification.

It belongs to the GcvH family. In terms of assembly, the glycine cleavage system is composed of four proteins: P, T, L and H. Requires (R)-lipoate as cofactor.

The glycine cleavage system catalyzes the degradation of glycine. The H protein shuttles the methylamine group of glycine from the P protein to the T protein. This chain is Glycine cleavage system H protein, found in Marinobacter nauticus (strain ATCC 700491 / DSM 11845 / VT8) (Marinobacter aquaeolei).